A 322-amino-acid chain; its full sequence is MVSVINTVDTSHEDMIHDAQMDYYGTRLATCSSDRSVKIFDVRNGGQILIADLRGHEGPVWQVAWAHPMYGNILASCSYDRKVIIWREENGTWEKSHEHAGHDSSVNSVCWAPHDYGLILACGSSDGAISLLTYTGEGQWEVKKINNAHTIGCNAVSWAPAVVPGSLIDHPSGQKPNYIKRFASGGCDNLIKLWKEEEDGQWKEEQKLEAHSDWVRDVAWAPSIGLPTSTIASCSQDGRVFIWTCDDASSNTWSPKLLHKFNDVVWHVSWSITANILAVSGGDNKVTLWKESVDGQWVCISDVNKGQGSVSASVTEGQQNEQ.

At V2 the chain carries N-acetylvaline. 6 WD repeats span residues 11 to 50 (SHEDMIHDAQMDYYGTRLATCSSDRSVKIFDVRNGGQILI), 55 to 96 (GHEG…WEKS), 101 to 144 (GHDS…EVKK), 148 to 204 (AHTI…QWKE), 210 to 253 (AHSD…SNTW), and 260 to 299 (KFNDVVWHVSWSITANILAVSGGDNKVTLWKESVDGQWVC). S184 is modified (phosphoserine). A Phosphoserine modification is found at S309.

Belongs to the WD repeat SEC13 family. In terms of assembly, at the nuclear pore: component of the Y-shaped Nup107-160 subcomplex of the nuclear pore complex (NPC). The Nup107-160 subcomplex includes NUP160, NUP133, NUP107, NUP98, NUP85, NUP43, NUP37, SEH1 and SEC13. At the COPII coat complex: interacts with SEC31A and SEC31B. Interacts with SEC16A. Interacts with SEC16B. Component of the GATOR2 subcomplex, composed of MIOS, SEC13, SEH1L, WDR24 and WDR59. The GATOR2 complex interacts with CASTOR1 and CASTOR2; the interaction is negatively regulated by arginine. The GATOR2 complex interacts with SESN1, SESN2 and SESN3; the interaction is negatively regulated by amino acids.

It localises to the cytoplasmic vesicle. The protein localises to the COPII-coated vesicle membrane. The protein resides in the endoplasmic reticulum membrane. Its subcellular location is the nucleus. It is found in the nuclear pore complex. It localises to the lysosome membrane. The GATOR2 complex is negatively regulated by the upstream amino acid sensors CASTOR1 and SESN2, which sequester the GATOR2 complex in absence of amino acids. In the presence of abundant amino acids, GATOR2 is released from CASTOR1 and SESN2 and activated. Functions as a component of the nuclear pore complex (NPC) and the COPII coat. At the endoplasmic reticulum, SEC13 is involved in the biogenesis of COPII-coated vesicles. Required for the exit of adipsin (CFD/ADN), an adipocyte-secreted protein from the endoplasmic reticulum. Functionally, as a component of the GATOR2 complex, functions as an activator of the amino acid-sensing branch of the mTORC1 signaling pathway. The GATOR2 complex indirectly activates mTORC1 through the inhibition of the GATOR1 subcomplex. GATOR2 probably acts as an E3 ubiquitin-protein ligase toward GATOR1. In the presence of abundant amino acids, the GATOR2 complex mediates ubiquitination of the NPRL2 core component of the GATOR1 complex, leading to GATOR1 inactivation. In the absence of amino acids, GATOR2 is inhibited, activating the GATOR1 complex. Within the GATOR2 complex, SEC13 and SEH1L are required to stabilize the complex. The protein is Protein SEC13 homolog of Homo sapiens (Human).